A 194-amino-acid chain; its full sequence is Putative 3-methyladenine DNA glycosylase (194 aa).

The protein belongs to the DNA glycosylase MPG family.

This Chlamydia felis (strain Fe/C-56) (Chlamydophila felis) protein is Putative 3-methyladenine DNA glycosylase.